We begin with the raw amino-acid sequence, 103 residues long: Small ribosomal subunit protein uS10 (103 aa).

It belongs to the universal ribosomal protein uS10 family. Part of the 30S ribosomal subunit.

Functionally, involved in the binding of tRNA to the ribosomes. The sequence is that of Small ribosomal subunit protein uS10 from Pseudoalteromonas translucida (strain TAC 125).